Here is a 918-residue protein sequence, read N- to C-terminus: GPI ethanolamine phosphate transferase 3 (918 aa).

Residues 16–36 traverse the membrane as a helical segment; it reads IGTWKYIQACIFFAIILISNF. 5 N-linked (GlcNAc...) asparagine glycosylation sites follow: Asn54, Asn71, Asn101, Asn197, and Asn399. 15 helical membrane-spanning segments follow: residues 429–449, 459–479, 486–506, 523–543, 547–563, 567–587, 616–636, 651–671, 687–707, 715–735, 738–758, 762–782, 813–833, 853–873, and 887–907; these read LFPM…LALL, MSAN…ILIL, SPFP…LNSF, FSIF…FTVW, LCHF…FCKC, MSPL…LQVI, TLIV…ILQL, LSIL…HHVF, SLAN…FFLL, INVI…LSFL, PLGH…IQLK, PSVG…SHFF, IFMF…IPLF, FSFI…AGFF, and FMLS…QCFG.

It belongs to the PIGG/PIGN/PIGO family. PIGO subfamily. In terms of processing, glycosylated.

Its subcellular location is the endoplasmic reticulum membrane. It functions in the pathway glycolipid biosynthesis; glycosylphosphatidylinositol-anchor biosynthesis. Involved in glycosylphosphatidylinositol-anchor biosynthesis. Transfers ethanolamine phosphate to the GPI third mannose which links the GPI-anchor to the C-terminus of the proteins by an amide bond. Involved in cell wall biosynthesis. This is GPI ethanolamine phosphate transferase 3 (gpi13) from Schizosaccharomyces pombe (strain 972 / ATCC 24843) (Fission yeast).